Here is a 123-residue protein sequence, read N- to C-terminus: Small ribosomal subunit protein uS12 (123 aa).

D89 carries the post-translational modification 3-methylthioaspartic acid.

The protein belongs to the universal ribosomal protein uS12 family. As to quaternary structure, part of the 30S ribosomal subunit. Contacts proteins S8 and S17. May interact with IF1 in the 30S initiation complex.

With S4 and S5 plays an important role in translational accuracy. Functionally, interacts with and stabilizes bases of the 16S rRNA that are involved in tRNA selection in the A site and with the mRNA backbone. Located at the interface of the 30S and 50S subunits, it traverses the body of the 30S subunit contacting proteins on the other side and probably holding the rRNA structure together. The combined cluster of proteins S8, S12 and S17 appears to hold together the shoulder and platform of the 30S subunit. This is Small ribosomal subunit protein uS12 from Beijerinckia indica subsp. indica (strain ATCC 9039 / DSM 1715 / NCIMB 8712).